Reading from the N-terminus, the 137-residue chain is Nucleoside diphosphate kinase (137 aa).

The ATP site is built by K9, F57, R85, T91, R102, and N112. H115 serves as the catalytic Pros-phosphohistidine intermediate.

Belongs to the NDK family. As to quaternary structure, homotetramer. Requires Mg(2+) as cofactor.

It is found in the cytoplasm. It carries out the reaction a 2'-deoxyribonucleoside 5'-diphosphate + ATP = a 2'-deoxyribonucleoside 5'-triphosphate + ADP. It catalyses the reaction a ribonucleoside 5'-diphosphate + ATP = a ribonucleoside 5'-triphosphate + ADP. Major role in the synthesis of nucleoside triphosphates other than ATP. The ATP gamma phosphate is transferred to the NDP beta phosphate via a ping-pong mechanism, using a phosphorylated active-site intermediate. This chain is Nucleoside diphosphate kinase, found in Geobacter sp. (strain M21).